Reading from the N-terminus, the 1228-residue chain is Membrane-anchored lipid-binding protein LAM1 (1228 aa).

Residues 1–1062 (MHEHKAELRL…IFKCFSKVNK (1062 aa)) lie on the Cytoplasmic side of the membrane. The PH domain maps to 308-421 (EKGLSGWLYM…WINTLTSHKR (114 aa)). One can recognise a VASt domain in the interval 773 to 978 (EAWCYFQDNF…KTREYLKKFN (206 aa)). A helical membrane pass occupies residues 1063–1083 (TLYYCLLISAVTNLFFVGKSI). The Lumenal portion of the chain corresponds to 1084-1228 (HSYFSVKSAE…EYNRLSAIPV (145 aa)). The N-linked (GlcNAc...) asparagine glycan is linked to N1205.

Belongs to the SIP3 family.

The protein resides in the mitochondrion membrane. The protein localises to the endoplasmic reticulum membrane. Its function is as follows. Involved in mitochondrial fragmentation during programmed cell death in response to high levels of alpha-factor mating pheromone or the drug amiodarone. May be involved in sterol transfer between intracellular membranes. The chain is Membrane-anchored lipid-binding protein LAM1 from Saccharomyces cerevisiae (strain ATCC 204508 / S288c) (Baker's yeast).